Consider the following 250-residue polypeptide: tRNA (guanine-N(1)-)-methyltransferase (250 aa).

Residues G116 and 136-141 (IGDYVL) each bind S-adenosyl-L-methionine.

The protein belongs to the RNA methyltransferase TrmD family. Homodimer.

It localises to the cytoplasm. The enzyme catalyses guanosine(37) in tRNA + S-adenosyl-L-methionine = N(1)-methylguanosine(37) in tRNA + S-adenosyl-L-homocysteine + H(+). Specifically methylates guanosine-37 in various tRNAs. The sequence is that of tRNA (guanine-N(1)-)-methyltransferase from Pseudomonas putida (strain ATCC 47054 / DSM 6125 / CFBP 8728 / NCIMB 11950 / KT2440).